Reading from the N-terminus, the 260-residue chain is 3'-5' ssDNA/RNA exonuclease TatD (260 aa).

A divalent metal cation-binding residues include E91, H127, and H152.

Belongs to the metallo-dependent hydrolases superfamily. TatD-type hydrolase family. TatD subfamily. As to quaternary structure, monomer. It depends on Mg(2+) as a cofactor.

The protein resides in the cytoplasm. Its function is as follows. 3'-5' exonuclease that prefers single-stranded DNA and RNA. May play a role in the H(2)O(2)-induced DNA damage repair. The polypeptide is 3'-5' ssDNA/RNA exonuclease TatD (Enterobacter sp. (strain 638)).